Consider the following 127-residue polypeptide: Secreted RxLR effector protein 3 (127 aa).

Residues 1–20 form the signal peptide; that stretch reads MRPPLLLFLTVTVLVSCASA. The short motif at 30–48 is the RxLR-dEER element; sequence RSLRSIKTTTNDDAAEEER.

Belongs to the RxLR effector family.

Its subcellular location is the secreted. The protein resides in the host cell. Secreted effector that partially suppresses elicitor-induced cell death in host and enhances virulence of P.parasitica. The polypeptide is Secreted RxLR effector protein 3 (Phytophthora nicotianae (Potato buckeye rot agent)).